Consider the following 244-residue polypeptide: Derlin-2.1 (244 aa).

Topologically, residues 1–21 are cytoplasmic; sequence MAQAVEEWYKQMPIITRSYLT. Residues 22 to 42 traverse the membrane as a helical segment; the sequence is AAVVTTVGCSLEIISPYNLYL. At 43–96 the chain is on the lumenal side; it reads NPTLVVKQYQFWRLVTNFLYFRKMDLDFLFHMFFLARYCKLLEENSFRGKTADF. A helical transmembrane segment spans residues 97 to 117; the sequence is LYMLLFGATVLTGIVLIGGMI. Residues 118-121 are Cytoplasmic-facing; sequence PYLS. Residues 122-142 traverse the membrane as a helical segment; the sequence is VSFSKIIFLSNSLTFMMVYVW. Over 143-152 the chain is Lumenal; the sequence is SKQNPYIHMS. Residues 153–173 traverse the membrane as a helical segment; sequence FLGLFTFTAAYLPWVLLGFSI. At 174–244 the chain is on the cytoplasmic side; it reads LVGASAWGDF…HAPFDEIHQD (71 aa).

Belongs to the derlin family.

The protein resides in the endoplasmic reticulum membrane. In terms of biological role, may be involved in the degradation process of specific misfolded endoplasmic reticulum (ER) luminal proteins. This is Derlin-2.1 (DER2.1) from Arabidopsis thaliana (Mouse-ear cress).